Here is a 115-residue protein sequence, read N- to C-terminus: T cell receptor beta variable 12-5 (115 aa).

The signal sequence occupies residues 1–21 (MATRLLCCVVLCLLGEELIDA). Residues 22-115 (RVTQTPRHKV…SAVYFCASGL (94 aa)) form the Ig-like domain. Cys42 and Cys111 are disulfide-bonded.

In terms of assembly, alpha-beta TR is a heterodimer composed of an alpha and beta chain; disulfide-linked. The alpha-beta TR is associated with the transmembrane signaling CD3 coreceptor proteins to form the TR-CD3 (TcR or TCR). The assembly of alpha-beta TR heterodimers with CD3 occurs in the endoplasmic reticulum where a single alpha-beta TR heterodimer associates with one CD3D-CD3E heterodimer, one CD3G-CD3E heterodimer and one CD247 homodimer forming a stable octameric structure. CD3D-CD3E and CD3G-CD3E heterodimers preferentially associate with TR alpha and TR beta chains, respectively. The association of the CD247 homodimer is the last step of TcR assembly in the endoplasmic reticulum and is required for transport to the cell surface.

It localises to the cell membrane. V region of the variable domain of T cell receptor (TR) beta chain that participates in the antigen recognition. Alpha-beta T cell receptors are antigen specific receptors which are essential to the immune response and are present on the cell surface of T lymphocytes. Recognize peptide-major histocompatibility (MH) (pMH) complexes that are displayed by antigen presenting cells (APC), a prerequisite for efficient T cell adaptive immunity against pathogens. Binding of alpha-beta TR to pMH complex initiates TR-CD3 clustering on the cell surface and intracellular activation of LCK that phosphorylates the ITAM motifs of CD3G, CD3D, CD3E and CD247 enabling the recruitment of ZAP70. In turn ZAP70 phosphorylates LAT, which recruits numerous signaling molecules to form the LAT signalosome. The LAT signalosome propagates signal branching to three major signaling pathways, the calcium, the mitogen-activated protein kinase (MAPK) kinase and the nuclear factor NF-kappa-B (NF-kB) pathways, leading to the mobilization of transcription factors that are critical for gene expression and essential for T cell growth and differentiation. The T cell repertoire is generated in the thymus, by V-(D)-J rearrangement. This repertoire is then shaped by intrathymic selection events to generate a peripheral T cell pool of self-MH restricted, non-autoaggressive T cells. Post-thymic interaction of alpha-beta TR with the pMH complexes shapes TR structural and functional avidity. In Homo sapiens (Human), this protein is T cell receptor beta variable 12-5.